Reading from the N-terminus, the 137-residue chain is Transcription antitermination protein NusB (137 aa).

It belongs to the NusB family.

Functionally, involved in transcription antitermination. Required for transcription of ribosomal RNA (rRNA) genes. Binds specifically to the boxA antiterminator sequence of the ribosomal RNA (rrn) operons. The sequence is that of Transcription antitermination protein NusB from Haemophilus ducreyi (strain 35000HP / ATCC 700724).